The sequence spans 207 residues: Small ribosomal subunit protein uS4c (207 aa).

The region spanning 92–156 is the S4 RNA-binding domain; sequence MRLDNILFRL…YQSIITKRIE (65 aa).

This sequence belongs to the universal ribosomal protein uS4 family. Part of the 30S ribosomal subunit. Contacts protein S5. The interaction surface between S4 and S5 is involved in control of translational fidelity.

The protein resides in the plastid. It localises to the chloroplast. Its function is as follows. One of the primary rRNA binding proteins, it binds directly to 16S rRNA where it nucleates assembly of the body of the 30S subunit. Functionally, with S5 and S12 plays an important role in translational accuracy. This Equisetum palustre (Marsh horsetail) protein is Small ribosomal subunit protein uS4c (rps4).